The chain runs to 443 residues: Protein AknT (443 aa).

It belongs to the cytochrome P450 family.

Functionally, involved in the biosynthesis of the anthracycline antitumor agent aclacinomycin A. AknT is required for the glycosylation of aklavinone aglycone by AknS to yield aclacinomycin T (rhodosaminyl-aklavinone). The sequence is that of Protein AknT from Streptomyces galilaeus.